The following is a 396-amino-acid chain: Elongation factor Tu (396 aa).

In terms of domain architecture, tr-type G spans 10–205 (KPHVNIGTIG…AVDESIPDPV (196 aa)). The interval 19-26 (GHVDHGKT) is G1. 19–26 (GHVDHGKT) contributes to the GTP binding site. T26 is a binding site for Mg(2+). Positions 62 to 66 (GITIN) are G2. Residues 83-86 (DAPG) form a G3 region. GTP contacts are provided by residues 83–87 (DAPGH) and 138–141 (NKAD). The interval 138 to 141 (NKAD) is G4. The segment at 175–177 (SAL) is G5.

This sequence belongs to the TRAFAC class translation factor GTPase superfamily. Classic translation factor GTPase family. EF-Tu/EF-1A subfamily. Monomer.

Its subcellular location is the cytoplasm. It carries out the reaction GTP + H2O = GDP + phosphate + H(+). Its function is as follows. GTP hydrolase that promotes the GTP-dependent binding of aminoacyl-tRNA to the A-site of ribosomes during protein biosynthesis. This Rhodococcus erythropolis (strain PR4 / NBRC 100887) protein is Elongation factor Tu.